A 198-amino-acid chain; its full sequence is N-acetyltransferase 9-like protein (198 aa).

The 173-residue stretch at 14 to 186 (IILVPYKEKH…SNNFTNLTAD (173 aa)) folds into the N-acetyltransferase domain.

The protein belongs to the acetyltransferase family. GNAT subfamily.

The sequence is that of N-acetyltransferase 9-like protein (nat9) from Nematostella vectensis (Starlet sea anemone).